Consider the following 481-residue polypeptide: Glutamate--tRNA ligase (481 aa).

The short motif at proline 10–asparagine 20 is the 'HIGH' region element. Residues lysine 251–arginine 255 carry the 'KMSKS' region motif. ATP is bound at residue lysine 254.

It belongs to the class-I aminoacyl-tRNA synthetase family. Glutamate--tRNA ligase type 1 subfamily. As to quaternary structure, monomer.

Its subcellular location is the cytoplasm. It catalyses the reaction tRNA(Glu) + L-glutamate + ATP = L-glutamyl-tRNA(Glu) + AMP + diphosphate. In terms of biological role, catalyzes the attachment of glutamate to tRNA(Glu) in a two-step reaction: glutamate is first activated by ATP to form Glu-AMP and then transferred to the acceptor end of tRNA(Glu). The chain is Glutamate--tRNA ligase from Exiguobacterium sibiricum (strain DSM 17290 / CCUG 55495 / CIP 109462 / JCM 13490 / 255-15).